The chain runs to 452 residues: Phosphoglucosamine mutase (452 aa).

The Phosphoserine intermediate role is filled by Ser104. Residues Ser104, Asp245, Asp247, and Asp249 each contribute to the Mg(2+) site. At Ser104 the chain carries Phosphoserine.

It belongs to the phosphohexose mutase family. It depends on Mg(2+) as a cofactor. In terms of processing, activated by phosphorylation.

The catalysed reaction is alpha-D-glucosamine 1-phosphate = D-glucosamine 6-phosphate. Catalyzes the conversion of glucosamine-6-phosphate to glucosamine-1-phosphate. This Gluconacetobacter diazotrophicus (strain ATCC 49037 / DSM 5601 / CCUG 37298 / CIP 103539 / LMG 7603 / PAl5) protein is Phosphoglucosamine mutase.